We begin with the raw amino-acid sequence, 327 residues long: 4-hydroxythreonine-4-phosphate dehydrogenase (327 aa).

Residues His-134 and Thr-135 each contribute to the substrate site. The a divalent metal cation site is built by His-164, His-209, and His-264. 3 residues coordinate substrate: Lys-272, Asn-281, and Arg-290.

It belongs to the PdxA family. In terms of assembly, homodimer. Zn(2+) serves as cofactor. It depends on Mg(2+) as a cofactor. Requires Co(2+) as cofactor.

The protein resides in the cytoplasm. The catalysed reaction is 4-(phosphooxy)-L-threonine + NAD(+) = 3-amino-2-oxopropyl phosphate + CO2 + NADH. It participates in cofactor biosynthesis; pyridoxine 5'-phosphate biosynthesis; pyridoxine 5'-phosphate from D-erythrose 4-phosphate: step 4/5. In terms of biological role, catalyzes the NAD(P)-dependent oxidation of 4-(phosphooxy)-L-threonine (HTP) into 2-amino-3-oxo-4-(phosphooxy)butyric acid which spontaneously decarboxylates to form 3-amino-2-oxopropyl phosphate (AHAP). This Shewanella frigidimarina (strain NCIMB 400) protein is 4-hydroxythreonine-4-phosphate dehydrogenase.